A 207-amino-acid chain; its full sequence is Large ribosomal subunit protein uL4 (207 aa).

Residues 50–76 (KTKTVSEVSGTTKKPFKQKGTGNARQG) form a disordered region.

This sequence belongs to the universal ribosomal protein uL4 family. In terms of assembly, part of the 50S ribosomal subunit.

Functionally, one of the primary rRNA binding proteins, this protein initially binds near the 5'-end of the 23S rRNA. It is important during the early stages of 50S assembly. It makes multiple contacts with different domains of the 23S rRNA in the assembled 50S subunit and ribosome. Its function is as follows. Forms part of the polypeptide exit tunnel. This Rickettsia canadensis (strain McKiel) protein is Large ribosomal subunit protein uL4.